The chain runs to 1260 residues: MLQQFTLLFLYLSIASAKTITGVFDSFNSLTWSNAANYAFKGPGYPTWNAVLGWSLDGTSANPGDTFTLNMPCVFKYTTSQTSVDLTADGVKYATCQFYSGEEFTTFSTLTCTVNDALKSSIKAFGTVTLPIAFNVGGTGSSTDLEDSKCFTAGTNTVTFNDGDKDISIDVEFEKSTVDPSGYLYASRVMPSLNKVTTLFVAPQCENGYTSGTMGFSSSNGDVAIDCSNIHIGITKGLNDWNYPVSSESFSYTKTCTSNGIQIKYQNVPAGYRPFIDAYISATDVNQYTLAYTNDYTCAGSRSQSKPFTLRWTGYKNSDAGSNGIVIVATTRTVTDSTTAVTTLPFNPSVDKTKTIEILQPIPTTTITTSYVGVTTSYSTKTAPIGETATVIVDVPYHTTTTVTSEWTGTITTTTTRTNPTDSIDTVVVQVPSPNPTVSTTEYWSQSYATTTTVTAPPGGTDTVIIREPPNHTVTTTEYWSQSFATTTTVTAPPGETDTVIIREPPNHTVTTTEYWSQSYATTTTVTAPPGGTDTVLIREPPNHTVTTTEYWSQSYATTTTVTAPPGGTDTVIIREPPNYTVTTTEYWSQSYATTTTITAPPGETDTVIIREPPNHTVTTTEYWSQSYATTTTVTAPPGGTDTVLIREPPNHTVTTTEYWSQSYATTTTVTAPPGGTDTVLIREPPNHTVTTTEYWSQSYATTTTVTAPPGGTDTVIIREPPNHTVTTTEYWSQSYATTTTVTAPPGGTDTVIIREPPNYTVTTTEYWSQSFATTTTVTAPPGGTDTVIIYESMSSSKISTSSNDITSIIPSFSRPHYVNSTTSDLSTFESSSMNTPTSISSDGMLLSSTTLVTESETTTESICSDGKECSRLSSSSGIVTNPDSNESSIVTSTVPTASTMSDSLSSTDGISATSSDNVSKSGVSVTTETSVTTIQTTPNPLSSSVTSLTQLSSIPSVSESESKVTFTSNGDNQSGTHDSQSTSTEIEIVTTSSTKVLPPVVSSNTDLTSEPTNTREQPTTLSTTSNSITEDITTSQPTGDNGDNTSSTNPVPTVATSTLASASEEDNKSGSHESASTSLKPSMGENSGLTTSTEIEATTTSPTEAPSPAVSSGTDVTTEPTDTREQPTTLSTTSKTNSESVATTQATNENGGKSPSTDLTSSLTTGTSASTSANSELVTSGSVTGGAVASASNDQSHSTSVTNSNSIVSNTPQTTLSQQVTSSSPSTNTFIASTYDGSGSIIQHSTWLYGLITLLSLFI.

The signal sequence occupies residues Met-1–Ala-17. 4 cysteine pairs are disulfide-bonded: Cys-73–Cys-150, Cys-96–Cys-112, Cys-205–Cys-298, and Cys-227–Cys-256. ALS repeat units follow at residues Thr-365–Pro-396, Thr-401–Pro-432, and Val-438–Pro-469. N-linked (GlcNAc...) asparagine glycosylation occurs at Asn-471. The stretch at Val-474–Pro-505 is one ALS 4 repeat. Asn-507 carries an N-linked (GlcNAc...) asparagine glycan. The ALS 5 repeat unit spans residues Val-510–Pro-541. Asn-543 is a glycosylation site (N-linked (GlcNAc...) asparagine). Residues Val-546–Pro-577 form an ALS 6 repeat. The N-linked (GlcNAc...) asparagine glycan is linked to Asn-579. One copy of the ALS 7 repeat lies at Val-582 to Pro-613. The N-linked (GlcNAc...) asparagine glycan is linked to Asn-615. The ALS 8 repeat unit spans residues Val-618–Pro-649. The N-linked (GlcNAc...) asparagine glycan is linked to Asn-651. Residues Val-654 to Pro-685 form an ALS 9 repeat. N-linked (GlcNAc...) asparagine glycosylation is present at Asn-687. The ALS 10 repeat unit spans residues Val-690–Pro-721. A glycan (N-linked (GlcNAc...) asparagine) is linked at Asn-723. An ALS 11 repeat occupies Val-726–Pro-757. N-linked (GlcNAc...) asparagine glycosylation is present at Asn-759. The ALS 12 repeat unit spans residues Val-762–Tyr-791. Asn-820, Asn-886, Asn-918, and Asn-973 each carry an N-linked (GlcNAc...) asparagine glycan. Composition is skewed to polar residues over residues Pro-896 to Asn-918 and Lys-964 to Asp-979. Disordered stretches follow at residues Pro-896–Val-924 and Ser-954–Pro-1226. Residues Ser-980–Thr-995 are compositionally biased toward low complexity. Polar residues predominate over residues Val-1002–Ser-1062. N-linked (GlcNAc...) asparagine glycans are attached at residues Asn-1045 and Asn-1068. Residues His-1073 to Leu-1090 are compositionally biased toward polar residues. The segment covering Thr-1091 to Ala-1110 has biased composition (low complexity). A compositionally biased stretch (polar residues) spans Val-1111–Lys-1154. Low complexity-rich tracts occupy residues Ser-1155–Ser-1176 and Ser-1197–Pro-1226. The GPI-anchor amidated glycine moiety is linked to residue Gly-1238. A propeptide spans Ser-1239 to Ile-1260 (removed in mature form).

It belongs to the ALS family. Post-translationally, the GPI-anchor is attached to the protein in the endoplasmic reticulum and serves to target the protein to the cell surface. There, the glucosamine-inositol phospholipid moiety is cleaved off and the GPI-modified mannoprotein is covalently attached via its lipidless GPI glycan remnant to the 1,6-beta-glucan of the outer cell wall layer.

The protein resides in the cell membrane. It localises to the secreted. It is found in the cell wall. Functionally, major cell surface adhesion protein which mediates both yeast-to-host tissue adherence and yeast aggregation. Acts as a downstream effector of the EFG1 regulatory pathway. Required for rapamycin-induced aggregation of C.albicans. Binds glycans and mediates adherence to endothelial and epithelial cells, thereby playing an important role in the pathogenesis of C.albicans infections. This is Agglutinin-like protein 1 (ALS1) from Candida albicans (strain SC5314 / ATCC MYA-2876) (Yeast).